Reading from the N-terminus, the 418-residue chain is Glutamyl-tRNA reductase (418 aa).

Residues 49–52, Ser108, 113–115, and Gln119 contribute to the substrate site; these read TCNR and EPQ. The active-site Nucleophile is Cys50. Residue 188 to 193 coordinates NADP(+); the sequence is GAGETI.

This sequence belongs to the glutamyl-tRNA reductase family. Homodimer.

The catalysed reaction is (S)-4-amino-5-oxopentanoate + tRNA(Glu) + NADP(+) = L-glutamyl-tRNA(Glu) + NADPH + H(+). It participates in porphyrin-containing compound metabolism; protoporphyrin-IX biosynthesis; 5-aminolevulinate from L-glutamyl-tRNA(Glu): step 1/2. Catalyzes the NADPH-dependent reduction of glutamyl-tRNA(Glu) to glutamate 1-semialdehyde (GSA). The protein is Glutamyl-tRNA reductase of Aliivibrio fischeri (strain MJ11) (Vibrio fischeri).